The chain runs to 122 residues: NADH-quinone oxidoreductase subunit A (122 aa).

The next 3 membrane-spanning stretches (helical) occupy residues 12–32 (IIIF…VNLI), 66–86 (LVAI…PWAI), and 91–111 (IGGL…VGFI).

Belongs to the complex I subunit 3 family. In terms of assembly, NDH-1 is composed of 14 different subunits. Subunits NuoA, H, J, K, L, M, N constitute the membrane sector of the complex.

The protein resides in the cell inner membrane. The enzyme catalyses a quinone + NADH + 5 H(+)(in) = a quinol + NAD(+) + 4 H(+)(out). NDH-1 shuttles electrons from NADH, via FMN and iron-sulfur (Fe-S) centers, to quinones in the respiratory chain. The immediate electron acceptor for the enzyme in this species is believed to be ubiquinone. Couples the redox reaction to proton translocation (for every two electrons transferred, four hydrogen ions are translocated across the cytoplasmic membrane), and thus conserves the redox energy in a proton gradient. This Pelagibacter ubique (strain HTCC1062) protein is NADH-quinone oxidoreductase subunit A.